We begin with the raw amino-acid sequence, 84 residues long: Small ribosomal subunit protein bS16 (84 aa).

It belongs to the bacterial ribosomal protein bS16 family.

In Dechloromonas aromatica (strain RCB), this protein is Small ribosomal subunit protein bS16.